A 491-amino-acid chain; its full sequence is Glutamyl-tRNA(Gln) amidotransferase subunit A (491 aa).

Active-site charge relay system residues include lysine 76 and serine 154. Catalysis depends on serine 178, which acts as the Acyl-ester intermediate.

It belongs to the amidase family. GatA subfamily. Heterotrimer of A, B and C subunits.

The catalysed reaction is L-glutamyl-tRNA(Gln) + L-glutamine + ATP + H2O = L-glutaminyl-tRNA(Gln) + L-glutamate + ADP + phosphate + H(+). Functionally, allows the formation of correctly charged Gln-tRNA(Gln) through the transamidation of misacylated Glu-tRNA(Gln) in organisms which lack glutaminyl-tRNA synthetase. The reaction takes place in the presence of glutamine and ATP through an activated gamma-phospho-Glu-tRNA(Gln). The chain is Glutamyl-tRNA(Gln) amidotransferase subunit A from Cereibacter sphaeroides (strain ATCC 17025 / ATH 2.4.3) (Rhodobacter sphaeroides).